The sequence spans 338 residues: Glycerol-3-phosphate dehydrogenase [NAD(P)+] (338 aa).

Positions 14, 15, 35, and 109 each coordinate NADPH. Positions 109 and 137 each coordinate sn-glycerol 3-phosphate. NADPH is bound at residue alanine 141. Residues lysine 192, aspartate 247, serine 257, arginine 258, and asparagine 259 each contribute to the sn-glycerol 3-phosphate site. Residue lysine 192 is the Proton acceptor of the active site. Arginine 258 provides a ligand contact to NADPH. NADPH is bound by residues leucine 282 and glutamate 284.

It belongs to the NAD-dependent glycerol-3-phosphate dehydrogenase family.

The protein localises to the cytoplasm. The catalysed reaction is sn-glycerol 3-phosphate + NAD(+) = dihydroxyacetone phosphate + NADH + H(+). It catalyses the reaction sn-glycerol 3-phosphate + NADP(+) = dihydroxyacetone phosphate + NADPH + H(+). The protein operates within membrane lipid metabolism; glycerophospholipid metabolism. In terms of biological role, catalyzes the reduction of the glycolytic intermediate dihydroxyacetone phosphate (DHAP) to sn-glycerol 3-phosphate (G3P), the key precursor for phospholipid synthesis. The sequence is that of Glycerol-3-phosphate dehydrogenase [NAD(P)+] from Rickettsia rickettsii (strain Iowa).